The primary structure comprises 279 residues: Tryptophan synthase alpha chain (279 aa).

Catalysis depends on proton acceptor residues E50 and D61.

This sequence belongs to the TrpA family. As to quaternary structure, tetramer of two alpha and two beta chains.

It catalyses the reaction (1S,2R)-1-C-(indol-3-yl)glycerol 3-phosphate + L-serine = D-glyceraldehyde 3-phosphate + L-tryptophan + H2O. It functions in the pathway amino-acid biosynthesis; L-tryptophan biosynthesis; L-tryptophan from chorismate: step 5/5. In terms of biological role, the alpha subunit is responsible for the aldol cleavage of indoleglycerol phosphate to indole and glyceraldehyde 3-phosphate. The sequence is that of Tryptophan synthase alpha chain from Rhizobium meliloti (strain 1021) (Ensifer meliloti).